The primary structure comprises 177 residues: MSRVGKKPVTVPSGVTASVEGQTVKVKGPKGQLQFVVHDDVDVKLENGEVTVKPRYETNRARALYGTARAQVANLVEGVTKGFEKKLEITGVGYRATLQGKNLQLALGYSHDVVYTIPEGIAITVPKPTEINIVGIDSQVVGQVAAEIRSYRPPEPYKGKGVRYANEFIFRKEGKKK.

This sequence belongs to the universal ribosomal protein uL6 family. As to quaternary structure, part of the 50S ribosomal subunit.

Functionally, this protein binds to the 23S rRNA, and is important in its secondary structure. It is located near the subunit interface in the base of the L7/L12 stalk, and near the tRNA binding site of the peptidyltransferase center. The protein is Large ribosomal subunit protein uL6 of Rhodopseudomonas palustris (strain BisA53).